A 360-amino-acid chain; its full sequence is tRNA-specific 2-thiouridylase MnmA (360 aa).

ATP is bound by residues 9–16 and leucine 35; that span reads AMSGGVDS. The active-site Nucleophile is the cysteine 104. Cysteine 104 and cysteine 197 are disulfide-bonded. Glycine 128 contributes to the ATP binding site. An interaction with tRNA region spans residues 147-149; it reads KDQ. Cysteine 197 functions as the Cysteine persulfide intermediate in the catalytic mechanism.

This sequence belongs to the MnmA/TRMU family.

Its subcellular location is the cytoplasm. The catalysed reaction is S-sulfanyl-L-cysteinyl-[protein] + uridine(34) in tRNA + AH2 + ATP = 2-thiouridine(34) in tRNA + L-cysteinyl-[protein] + A + AMP + diphosphate + H(+). Catalyzes the 2-thiolation of uridine at the wobble position (U34) of tRNA, leading to the formation of s(2)U34. The sequence is that of tRNA-specific 2-thiouridylase MnmA from Salinispora tropica (strain ATCC BAA-916 / DSM 44818 / JCM 13857 / NBRC 105044 / CNB-440).